The chain runs to 290 residues: S-methyl-5'-thioadenosine phosphorylase (290 aa).

Phosphate-binding positions include Ser11, 53–54 (RH), and 86–87 (SA). Met184 lines the substrate pocket. Thr185 is a binding site for phosphate. 208–210 (DYD) is a substrate binding site.

It belongs to the PNP/MTAP phosphorylase family. MTAP subfamily. Homohexamer. Dimer of a homotrimer.

The enzyme catalyses S-methyl-5'-thioadenosine + phosphate = 5-(methylsulfanyl)-alpha-D-ribose 1-phosphate + adenine. The protein operates within amino-acid biosynthesis; L-methionine biosynthesis via salvage pathway; S-methyl-5-thio-alpha-D-ribose 1-phosphate from S-methyl-5'-thioadenosine (phosphorylase route): step 1/1. Functionally, catalyzes the reversible phosphorylation of S-methyl-5'-thioadenosine (MTA) to adenine and 5-methylthioribose-1-phosphate. Involved in the breakdown of MTA, a major by-product of polyamine biosynthesis. Responsible for the first step in the methionine salvage pathway after MTA has been generated from S-adenosylmethionine. Has broad substrate specificity with 6-aminopurine nucleosides as preferred substrates. This Cereibacter sphaeroides (strain ATCC 17023 / DSM 158 / JCM 6121 / CCUG 31486 / LMG 2827 / NBRC 12203 / NCIMB 8253 / ATH 2.4.1.) (Rhodobacter sphaeroides) protein is S-methyl-5'-thioadenosine phosphorylase.